A 183-amino-acid chain; its full sequence is Pectinesterase inhibitor 8 (183 aa).

Residues 1-30 (MAQRASRRPAAAAAAVVVAVVLAVSGGVGA) form the signal peptide. 2 disulfides stabilise this stretch: Cys-36/Cys-51 and Cys-107/Cys-147.

This sequence belongs to the PMEI family.

It is found in the secreted. It localises to the extracellular space. The protein resides in the apoplast. Pectin methylesterase (PME) inhibitor that inhibits PME in vitro. This is Pectinesterase inhibitor 8 from Oryza sativa subsp. japonica (Rice).